The chain runs to 257 residues: Ribosome maturation factor RimP (257 aa).

Residues Leu182–His257 form a disordered region. Over residues Asp191–Ala205 the composition is skewed to acidic residues. Over residues Lys224–Arg236 the composition is skewed to low complexity.

Belongs to the RimP family.

Its subcellular location is the cytoplasm. Functionally, required for maturation of 30S ribosomal subunits. The sequence is that of Ribosome maturation factor RimP from Methylobacterium radiotolerans (strain ATCC 27329 / DSM 1819 / JCM 2831 / NBRC 15690 / NCIMB 10815 / 0-1).